Reading from the N-terminus, the 161-residue chain is Short form salivary protein D7S (161 aa).

Positions 1-18 (MKFPSILLAILLFKPITA) are cleaved as a signal peptide. 3 disulfides stabilise this stretch: Cys-33–Cys-67, Cys-47–Cys-155, and Cys-109–Cys-125.

Belongs to the PBP/GOBP family.

The protein resides in the secreted. Its function is as follows. In contrast to the related D7 salivary proteins, does not bind serotonin. In Culex quinquefasciatus (Southern house mosquito), this protein is Short form salivary protein D7S.